The sequence spans 355 residues: MLDEEERITMSHELGRLEDLPQDYRDELKQLNLVPLWPSLRAVLPPNVPTRQTQPTYWSYQTLKPLLLKAGELTPIEKAERRVLVLANPGHGLEKMQASAAIYLGMQLLLPGEWAPSHRHTPNAVRMIVEGEGAYTTVDGEKCPMSRGDLILTPTGLWHEHGHDGNEPVVWLDVLDLPLVYYMEASYHIDGERQQVDPGRGDCAWTRAGVVPTPVFQRSDKRYPLLRYPWADTRAALLSLAADQPEQECVQVTYVNPETGDDAENILGFYALMLKPGQTLRLPVRSPAVVFHQIEGRSEARIAESTFALREADTCCAPGYTEVTLKNLSADQPSFIFMADESPLHRKLGVFENRG.

The Cupin type-2 domain occupies 106-174 (MQLLLPGEWA…GNEPVVWLDV (69 aa)).

It belongs to the gentisate 1,2-dioxygenase family.

It catalyses the reaction 2,5-dihydroxybenzoate + O2 = 3-maleylpyruvate + H(+). It participates in aromatic compound metabolism; naphthalene degradation. Functionally, catalyzes the oxygen-dependent ring fission of gentisate between the carboxyl and proximal hydroxyl groups at positions 1 and 2 of the aromatic ring to form maleylpyruvate. Can also catalyze oxidation of alkyl- and halogenated gentisates. Exhibits higher affinity for 3-substituted gentisates than for gentisate but has higher activity with gentisate. In Ralstonia sp, this protein is Gentisate 1,2-dioxygenase.